Here is a 318-residue protein sequence, read N- to C-terminus: Glutathione synthetase (318 aa).

An ATP-grasp domain is found at K128–A313. L154–G210 contacts ATP. Positions 284 and 286 each coordinate Mg(2+).

Belongs to the prokaryotic GSH synthase family. Requires Mg(2+) as cofactor. It depends on Mn(2+) as a cofactor.

It catalyses the reaction gamma-L-glutamyl-L-cysteine + glycine + ATP = glutathione + ADP + phosphate + H(+). The protein operates within sulfur metabolism; glutathione biosynthesis; glutathione from L-cysteine and L-glutamate: step 2/2. This chain is Glutathione synthetase, found in Neisseria meningitidis serogroup A / serotype 4A (strain DSM 15465 / Z2491).